Here is a 246-residue protein sequence, read N- to C-terminus: tRNA (guanine-N(1)-)-methyltransferase (246 aa).

S-adenosyl-L-methionine contacts are provided by residues G117 and 137 to 142 (IGDYVL).

Belongs to the RNA methyltransferase TrmD family. Homodimer.

It is found in the cytoplasm. The catalysed reaction is guanosine(37) in tRNA + S-adenosyl-L-methionine = N(1)-methylguanosine(37) in tRNA + S-adenosyl-L-homocysteine + H(+). Specifically methylates guanosine-37 in various tRNAs. The protein is tRNA (guanine-N(1)-)-methyltransferase of Acinetobacter baumannii (strain AB307-0294).